The following is an 810-amino-acid chain: Probable dehydratase YbiW (810 aa).

The PFL domain occupies 11 to 682 (DRIKAHKNAL…QTMATPDGRK (672 aa)). The tract at residues 677–699 (TPDGRKAHTPLAEGASPASGTDH) is disordered. The region spanning 689 to 810 (EGASPASGTD…DIIARTEHML (122 aa)) is the Glycine radical domain. Residue glycine 786 is modified to Glycine radical.

This sequence belongs to the glycyl radical enzyme (GRE) family.

Functionally, probably shows dehydratase activity. The protein is Probable dehydratase YbiW (ybiW) of Escherichia coli (strain K12).